We begin with the raw amino-acid sequence, 203 residues long: Ras-related protein RABG3b (203 aa).

15–22 (GDSGVGKT) contributes to the GTP binding site. The Effector region signature appears at 37-45 (YKATIGADF). GTP contacts are provided by residues 63–67 (DTAGQ), 125–128 (NKVD), and 158–159 (SA). S-geranylgeranyl cysteine attachment occurs at residues Cys201 and Cys203. The residue at position 203 (Cys203) is a Cysteine methyl ester.

The protein belongs to the small GTPase superfamily. Rab family. In terms of assembly, interacts with VPS39. Expressed in xylem cells of inflorescence stems.

It localises to the cell membrane. In terms of biological role, intracellular vesicle trafficking and protein transport. Functions in autophagy. Involved in xylem and tracheary element differentiation. The protein is Ras-related protein RABG3b (RABG3B) of Arabidopsis thaliana (Mouse-ear cress).